Consider the following 685-residue polypeptide: Methionine--tRNA ligase (685 aa).

A 'HIGH' region motif is present at residues 15–25 (PYANGPIHLGH). Residues Cys146, Cys149, Cys159, and Cys162 each coordinate Zn(2+). A 'KMSKS' region motif is present at residues 331–335 (KMSKS). Lys334 lines the ATP pocket. The region spanning 583 to 685 (DFAKMDLRVA…AGVKAGSRVK (103 aa)) is the tRNA-binding domain.

This sequence belongs to the class-I aminoacyl-tRNA synthetase family. MetG type 1 subfamily. Homodimer. Zn(2+) is required as a cofactor.

It localises to the cytoplasm. The enzyme catalyses tRNA(Met) + L-methionine + ATP = L-methionyl-tRNA(Met) + AMP + diphosphate. Functionally, is required not only for elongation of protein synthesis but also for the initiation of all mRNA translation through initiator tRNA(fMet) aminoacylation. The polypeptide is Methionine--tRNA ligase (Actinobacillus succinogenes (strain ATCC 55618 / DSM 22257 / CCUG 43843 / 130Z)).